A 148-amino-acid chain; its full sequence is Large ribosomal subunit protein bL9 (148 aa).

Residues 46–65 (QLQQQNKHAEQEREQEIEDA) form a disordered region. Residues 52 to 65 (KHAEQEREQEIEDA) show a composition bias toward basic and acidic residues.

This sequence belongs to the bacterial ribosomal protein bL9 family.

In terms of biological role, binds to the 23S rRNA. This is Large ribosomal subunit protein bL9 from Staphylococcus carnosus (strain TM300).